Consider the following 369-residue polypeptide: Phosphoribosylformylglycinamidine cyclo-ligase (369 aa).

The segment at 1–22 (MSKRDTSQPKTGQPKTSKRRNG) is disordered.

The protein belongs to the AIR synthase family.

It is found in the cytoplasm. It catalyses the reaction 2-formamido-N(1)-(5-O-phospho-beta-D-ribosyl)acetamidine + ATP = 5-amino-1-(5-phospho-beta-D-ribosyl)imidazole + ADP + phosphate + H(+). The protein operates within purine metabolism; IMP biosynthesis via de novo pathway; 5-amino-1-(5-phospho-D-ribosyl)imidazole from N(2)-formyl-N(1)-(5-phospho-D-ribosyl)glycinamide: step 2/2. In Mesorhizobium japonicum (strain LMG 29417 / CECT 9101 / MAFF 303099) (Mesorhizobium loti (strain MAFF 303099)), this protein is Phosphoribosylformylglycinamidine cyclo-ligase.